We begin with the raw amino-acid sequence, 25 residues long: Aurein-5.1 (25 aa).

Belongs to the frog skin active peptide (FSAP) family. Aurein subfamily. As to expression, expressed by the skin dorsal glands.

It localises to the secreted. Its function is as follows. Has no antimicrobial or anticancer activity. In Ranoidea aurea (Green and golden bell frog), this protein is Aurein-5.1.